Here is a 339-residue protein sequence, read N- to C-terminus: Biotin synthase (339 aa).

In terms of domain architecture, Radical SAM core spans 51 to 278 (TEVELATLLS…KARVRLSAGR (228 aa)). Positions 66, 70, and 73 each coordinate [4Fe-4S] cluster. [2Fe-2S] cluster-binding residues include Cys110, Cys141, Cys201, and Arg273.

This sequence belongs to the radical SAM superfamily. Biotin synthase family. As to quaternary structure, homodimer. Requires [4Fe-4S] cluster as cofactor. [2Fe-2S] cluster is required as a cofactor.

It carries out the reaction (4R,5S)-dethiobiotin + (sulfur carrier)-SH + 2 reduced [2Fe-2S]-[ferredoxin] + 2 S-adenosyl-L-methionine = (sulfur carrier)-H + biotin + 2 5'-deoxyadenosine + 2 L-methionine + 2 oxidized [2Fe-2S]-[ferredoxin]. The protein operates within cofactor biosynthesis; biotin biosynthesis; biotin from 7,8-diaminononanoate: step 2/2. Catalyzes the conversion of dethiobiotin (DTB) to biotin by the insertion of a sulfur atom into dethiobiotin via a radical-based mechanism. This chain is Biotin synthase, found in Janthinobacterium sp. (strain Marseille) (Minibacterium massiliensis).